Here is a 177-residue protein sequence, read N- to C-terminus: UPF0102 protein BPP4042 (177 aa).

The disordered stretch occupies residues 13-43 (AAQAQRRLHRRPPASPRASPGARDGGSPTQR).

Belongs to the UPF0102 family.

The sequence is that of UPF0102 protein BPP4042 from Bordetella parapertussis (strain 12822 / ATCC BAA-587 / NCTC 13253).